Reading from the N-terminus, the 129-residue chain is MAALTNEQIIEAIGEKTILELSELIKAMEEKFGVTAAAPVAVVAGGAAGGGAAEEEKTEFTVTLKGLSDPGKKIGVIKEVRNVIPGLGLKEAKELVEGAPKVLKEDVSKEEAAKIKEAITAAGGEVEIA.

Belongs to the bacterial ribosomal protein bL12 family. As to quaternary structure, homodimer. Part of the ribosomal stalk of the 50S ribosomal subunit. Forms a multimeric L10(L12)X complex, where L10 forms an elongated spine to which 2 to 4 L12 dimers bind in a sequential fashion. Binds GTP-bound translation factors.

Functionally, forms part of the ribosomal stalk which helps the ribosome interact with GTP-bound translation factors. Is thus essential for accurate translation. This is Large ribosomal subunit protein bL12 from Treponema denticola (strain ATCC 35405 / DSM 14222 / CIP 103919 / JCM 8153 / KCTC 15104).